Reading from the N-terminus, the 353-residue chain is Probable G-protein coupled receptor 139 (353 aa).

The Extracellular segment spans residues 1-29 (MEHTHAHLAANSSLSWWSPGSACGLGFVP). Asn-11 carries N-linked (GlcNAc...) asparagine glycosylation. A helical membrane pass occupies residues 30–50 (VVYYSLLLCLGLPANILTVII). Residues 51–65 (LSQLVARRQKSSYNY) are Cytoplasmic-facing. Residues 66-86 (LLALAAADILVLFFIVFVDFL) traverse the membrane as a helical segment. Topologically, residues 87-102 (LEDFILNMQMPQVPDK) are extracellular. The helical transmembrane segment at 103–123 (IIEVLEFSSIHTSIWITVPLT) threads the bilayer. Residues 124–148 (IDRYIAVCHPLKYHTVSYPARTRKV) lie on the Cytoplasmic side of the membrane. The helical transmembrane segment at 149 to 169 (IVSVYITCFLTSIPYYWWPNI) threads the bilayer. The Extracellular portion of the chain corresponds to 170-181 (WTEDYISTSVHH). Residues 182 to 202 (VLIWIHCFTVYLVPCSIFFIL) traverse the membrane as a helical segment. Over 203–228 (NSIIVYKLRRKSNFRLRGYSTGKTTA) the chain is Cytoplasmic. A helical transmembrane segment spans residues 229 to 249 (ILFTITSIFATLWAPRIIMIL). Topologically, residues 250-268 (YHLYGAPIQNRWLVHIMSD) are extracellular. A helical transmembrane segment spans residues 269–289 (IANMLALLNTAINFFLYCFIS). The Cytoplasmic segment spans residues 290–353 (KRFRTMAAAT…KNGKPIKVSP (64 aa)).

It belongs to the G-protein coupled receptor 1 family. As to expression, expressed almost exclusively in the brain. Detected at very low levels in the peripheral tissues.

The protein resides in the cell membrane. Its function is as follows. Orphan receptor. Seems to act through a G(q/11)-mediated pathway. This is Probable G-protein coupled receptor 139 (GPR139) from Homo sapiens (Human).